Reading from the N-terminus, the 90-residue chain is Translation initiation factor IF-1 (90 aa).

The S1-like domain occupies 7-76 (KEDVIRMEGT…TRGRIVYRKK (70 aa)).

The protein belongs to the IF-1 family. As to quaternary structure, component of the 30S ribosomal translation pre-initiation complex which assembles on the 30S ribosome in the order IF-2 and IF-3, IF-1 and N-formylmethionyl-tRNA(fMet); mRNA recruitment can occur at any time during PIC assembly.

The protein resides in the cytoplasm. In terms of biological role, one of the essential components for the initiation of protein synthesis. Stabilizes the binding of IF-2 and IF-3 on the 30S subunit to which N-formylmethionyl-tRNA(fMet) subsequently binds. Helps modulate mRNA selection, yielding the 30S pre-initiation complex (PIC). Upon addition of the 50S ribosomal subunit IF-1, IF-2 and IF-3 are released leaving the mature 70S translation initiation complex. The sequence is that of Translation initiation factor IF-1 from Fervidobacterium nodosum (strain ATCC 35602 / DSM 5306 / Rt17-B1).